Here is a 204-residue protein sequence, read N- to C-terminus: LexA repressor (204 aa).

The segment at residues 28–48 is a DNA-binding region (H-T-H motif); that stretch reads VREIGQAVGLASSSTVHGHLS. Catalysis depends on for autocatalytic cleavage activity residues Ser-126 and Lys-164.

Belongs to the peptidase S24 family. In terms of assembly, homodimer.

It carries out the reaction Hydrolysis of Ala-|-Gly bond in repressor LexA.. In terms of biological role, represses a number of genes involved in the response to DNA damage (SOS response), including recA and lexA. In the presence of single-stranded DNA, RecA interacts with LexA causing an autocatalytic cleavage which disrupts the DNA-binding part of LexA, leading to derepression of the SOS regulon and eventually DNA repair. The sequence is that of LexA repressor from Bacillus mycoides (strain KBAB4) (Bacillus weihenstephanensis).